The primary structure comprises 412 residues: MGQDQTKQQIEKGLHLYQSNQTEKALQVWMRVLEKSADPAGRFRVLGCLITAHAEMGRYKDMLKFAVVQIDTARELEDPNYLTEGYLNLARSNEKLCEFQKTISYCKTCLNMQGTTVSLQLNGQVSLSMGNAFLGLSIFQKALECFEKALRYAHNNDDKMLECRVCCSLGNFYAQIKDYEKALFFPCKAAELVNDYGAGWSLKYRAMSQYHMAVAYRKLGRLADAMDCCEESMKIALQHGDRPLQALCLLCFADIHLSRRDVQTAFPRYDSAMSIMTEIGNRLGQIQVLLGVAKCWMIQKELDKALESIEKAQELAEGLGNKLGLLKLHCLCERIYRTKGLQQELRDHVVKFHECVEEMELYCGMCGESIGEKNNQLQALPCSHFFHLKCLQTNGTRGCPNCRRLSVKPGYV.

Gly-2 carries N-myristoyl glycine lipidation. TPR repeat units lie at residues 6–39 (TKQQIEKGLHLYQSNQTEKALQVWMRVLEKSADP), 83–116 (TEGYLNLARSNEKLCEFQKTISYCKTCLNMQGTT), 123–156 (GQVSLSMGNAFLGLSIFQKALECFEKALRYAHNN), 163–196 (CRVCCSLGNFYAQIKDYEKALFFPCKAAELVNDY), 206–239 (AMSQYHMAVAYRKLGRLADAMDCCEESMKIALQH), 246–279 (ALCLLCFADIHLSRRDVQTAFPRYDSAMSIMTEI), and 286–319 (IQVLLGVAKCWMIQKELDKALESIEKAQELAEGL). Position 196 is a phosphotyrosine (Tyr-196). The segment at 363–403 (CGMCGESIGEKNNQLQALPCSHFFHLKCLQTNGTRGCPNCR) adopts an RING-type zinc-finger fold.

It belongs to the RAPsyn family. In terms of tissue distribution, expressed in muscle fibers and in neurons.

The protein resides in the cell membrane. It is found in the postsynaptic cell membrane. The protein localises to the cytoplasm. Its subcellular location is the cytoskeleton. Its function is as follows. Postsynaptic protein required for clustering of nicotinic acetylcholine receptors (nAChRs) at the neuromuscular junction. It may link the receptor to the underlying postsynaptic cytoskeleton, possibly by direct association with actin or spectrin. This is 43 kDa receptor-associated protein of the synapse (RAPSN) from Gallus gallus (Chicken).